A 598-amino-acid chain; its full sequence is Urease subunit alpha (598 aa).

The region spanning 136 to 598 (GGLDTHVHWL…APLAQRYFLF (463 aa)) is the Urease domain. 3 residues coordinate Ni(2+): His141, His143, and Lys223. At Lys223 the chain carries N6-carboxylysine. His225 is a substrate binding site. His252 and His278 together coordinate Ni(2+). The active-site Proton donor is His326. Asp366 contributes to the Ni(2+) binding site.

Belongs to the metallo-dependent hydrolases superfamily. Urease alpha subunit family. Heterotrimer of UreA (gamma), UreB (beta) and UreC (alpha) subunits. Three heterotrimers associate to form the active enzyme. Requires Ni cation as cofactor. Carboxylation allows a single lysine to coordinate two nickel ions.

Its subcellular location is the cytoplasm. It carries out the reaction urea + 2 H2O + H(+) = hydrogencarbonate + 2 NH4(+). The protein operates within nitrogen metabolism; urea degradation; CO(2) and NH(3) from urea (urease route): step 1/1. The protein is Urease subunit alpha of Ureaplasma urealyticum serovar 10 (strain ATCC 33699 / Western).